Consider the following 174-residue polypeptide: Probable carboxylesterase Culp5 (174 aa).

Catalysis depends on serine 67, which acts as the Nucleophile. A disulfide bridge links cysteine 137 with cysteine 144. Aspartate 141 is a catalytic residue. Histidine 153 functions as the Proton donor/acceptor in the catalytic mechanism.

The protein belongs to the cutinase family.

In terms of biological role, does not exhibit cutinase activity. The sequence is that of Probable carboxylesterase Culp5 from Mycobacterium tuberculosis (strain ATCC 25618 / H37Rv).